Here is an 835-residue protein sequence, read N- to C-terminus: Protein translocase subunit SecA (835 aa).

Residues Gln85, 103-107 (GEGKT), and Asp492 contribute to the ATP site. A disordered region spans residues 788 to 807 (VQGEAVHPSSDGEEAKKKPV). Zn(2+)-binding residues include Cys819, Cys821, Cys830, and Cys831.

It belongs to the SecA family. Monomer and homodimer. Part of the essential Sec protein translocation apparatus which comprises SecA, SecYEG and auxiliary proteins SecDF. Other proteins may also be involved. Zn(2+) is required as a cofactor.

Its subcellular location is the cell membrane. It is found in the cytoplasm. It carries out the reaction ATP + H2O + cellular proteinSide 1 = ADP + phosphate + cellular proteinSide 2.. Functionally, part of the Sec protein translocase complex. Interacts with the SecYEG preprotein conducting channel. Has a central role in coupling the hydrolysis of ATP to the transfer of proteins into and across the cell membrane, serving as an ATP-driven molecular motor driving the stepwise translocation of polypeptide chains across the membrane. This Bacillus cereus (strain ATCC 10987 / NRS 248) protein is Protein translocase subunit SecA.